The sequence spans 447 residues: uncharacterized protein (447 aa).

A run of 3 helical transmembrane segments spans residues 28 to 48 (IVIVSATYSISLDSTVLYPAV), 241 to 261 (IDASFTSIFYSVFMLSIYYAI), and 397 to 417 (PFVLNVITVADGPCSFSLSIF).

Its subcellular location is the membrane. This is an uncharacterized protein from Schizosaccharomyces pombe (strain 972 / ATCC 24843) (Fission yeast).